A 251-amino-acid chain; its full sequence is DNA repair protein RecO (251 aa).

This sequence belongs to the RecO family.

Involved in DNA repair and RecF pathway recombination. In Albidiferax ferrireducens (strain ATCC BAA-621 / DSM 15236 / T118) (Rhodoferax ferrireducens), this protein is DNA repair protein RecO.